The primary structure comprises 75 residues: Small ribosomal subunit protein bS18 (75 aa).

Belongs to the bacterial ribosomal protein bS18 family. In terms of assembly, part of the 30S ribosomal subunit. Forms a tight heterodimer with protein bS6.

In terms of biological role, binds as a heterodimer with protein bS6 to the central domain of the 16S rRNA, where it helps stabilize the platform of the 30S subunit. This chain is Small ribosomal subunit protein bS18, found in Methylobacillus flagellatus (strain ATCC 51484 / DSM 6875 / VKM B-1610 / KT).